The following is a 500-amino-acid chain: Zinc finger and BTB domain-containing protein 34 (500 aa).

Positions 32 to 96 constitute a BTB domain; the sequence is CDIIVHIQGQ…CYTGRMSLQL (65 aa). Residue Ser164 is modified to Phosphoserine. The interval 164–209 is disordered; the sequence is SPPYCSQGRQPTASSDLRMETTPSKALRSRLQEEGHSDRGSSGSVS. A compositionally biased stretch (basic and acidic residues) spans 193–202; that stretch reads RLQEEGHSDR. Glycyl lysine isopeptide (Lys-Gly) (interchain with G-Cter in SUMO2) cross-links involve residues Lys235 and Lys237. The segment covering 236 to 245 has biased composition (basic and acidic residues); sequence VKMEKSDRPS. Disordered regions lie at residues 236–256 and 341–360; these read VKMEKSDRPSCSDSSSLGDDG and SDSEAMMNNPGYESSPRERS. C2H2-type zinc fingers lie at residues 372 to 394 and 400 to 422; these read LICIYCGKSFNQKGSLDRHMRLH and FVCKFCGKKYTRKDQLEYHIRGH. Lys426 participates in a covalent cross-link: Glycyl lysine isopeptide (Lys-Gly) (interchain with G-Cter in SUMO2). The C2H2-type 3 zinc finger occupies 428–451; that stretch reads FRCEICGKCFPFQGTLNQHLRKNH. Ser463 is modified (phosphoserine). A Glycyl lysine isopeptide (Lys-Gly) (interchain with G-Cter in SUMO2) cross-link involves residue Lys474. Positions 478-500 are disordered; the sequence is DASASEMGLDSRMEIHTVSDAPD.

Expressed in several tissues, including heart, brain, thymus, skeletal muscle, small intestine, testis, kidney, placenta, peripheral blood cells and adult and fetal liver.

The protein resides in the nucleus. Functionally, may be a transcriptional repressor. In Homo sapiens (Human), this protein is Zinc finger and BTB domain-containing protein 34 (ZBTB34).